Consider the following 216-residue polypeptide: Elongation factor Ts (216 aa).

The involved in Mg(2+) ion dislocation from EF-Tu stretch occupies residues 81-84; that stretch reads TDFV.

Belongs to the EF-Ts family.

Its subcellular location is the cytoplasm. In terms of biological role, associates with the EF-Tu.GDP complex and induces the exchange of GDP to GTP. It remains bound to the aminoacyl-tRNA.EF-Tu.GTP complex up to the GTP hydrolysis stage on the ribosome. The chain is Elongation factor Ts from Citrifermentans bemidjiense (strain ATCC BAA-1014 / DSM 16622 / JCM 12645 / Bem) (Geobacter bemidjiensis).